The following is a 64-amino-acid chain: MLILTRRVGETLMIGDDVTVTVLGVKGNQVRIGVNAPKDVSVHREEIYERIKKEQQAGPEHDSD.

This sequence belongs to the CsrA/RsmA family. In terms of assembly, homodimer; the beta-strands of each monomer intercalate to form a hydrophobic core, while the alpha-helices form wings that extend away from the core.

The protein resides in the cytoplasm. Functionally, a key translational regulator that binds mRNA to regulate translation initiation and/or mRNA stability. Mediates global changes in gene expression, shifting from rapid growth to stress survival by linking envelope stress, the stringent response and the catabolite repression systems. Usually binds in the 5'-UTR; binding at or near the Shine-Dalgarno sequence prevents ribosome-binding, repressing translation, binding elsewhere in the 5'-UTR can activate translation and/or stabilize the mRNA. Its function is antagonized by small RNA(s). The polypeptide is Translational regulator CsrA (Methylococcus capsulatus (strain ATCC 33009 / NCIMB 11132 / Bath)).